The sequence spans 449 residues: Glucose-6-phosphate isomerase 1 (449 aa).

Thr-38 carries the phosphothreonine modification. Glu-290 (proton donor) is an active-site residue. Active-site residues include His-311 and Lys-425.

Belongs to the GPI family. As to quaternary structure, homodimer.

It localises to the cytoplasm. It carries out the reaction alpha-D-glucose 6-phosphate = beta-D-fructose 6-phosphate. The protein operates within carbohydrate biosynthesis; gluconeogenesis. It participates in carbohydrate degradation; glycolysis; D-glyceraldehyde 3-phosphate and glycerone phosphate from D-glucose: step 2/4. Its function is as follows. Catalyzes the reversible isomerization of glucose-6-phosphate to fructose-6-phosphate. This Geobacillus stearothermophilus (Bacillus stearothermophilus) protein is Glucose-6-phosphate isomerase 1.